Here is a 202-residue protein sequence, read N- to C-terminus: Thymidine kinase (202 aa).

ATP-binding positions include 16–23 and 99–102; these read GPMFSGKS and DEVQ. E100 functions as the Proton acceptor in the catalytic mechanism. Residues C156, C159, C194, and H197 each coordinate Zn(2+).

The protein belongs to the thymidine kinase family. In terms of assembly, homotetramer.

It localises to the cytoplasm. The catalysed reaction is thymidine + ATP = dTMP + ADP + H(+). The sequence is that of Thymidine kinase from Deinococcus deserti (strain DSM 17065 / CIP 109153 / LMG 22923 / VCD115).